The chain runs to 180 residues: Pyruvoyl-dependent arginine decarboxylase (180 aa).

The residue at position 41 (S41) is a Pyruvic acid (Ser).

The protein belongs to the PdaD family. Pyruvate is required as a cofactor.

The catalysed reaction is L-arginine + H(+) = agmatine + CO2. In Methanococcoides burtonii (strain DSM 6242 / NBRC 107633 / OCM 468 / ACE-M), this protein is Pyruvoyl-dependent arginine decarboxylase.